The chain runs to 233 residues: Glyceraldehyde 3-phosphate phosphatase (233 aa).

The protein belongs to the HAD-like hydrolase superfamily. The cofactor is Mg(2+).

Its function is as follows. Catalyzes the dephosphorylation of D,L-glyceraldehyde 3-phosphate in vitro. In Methanopyrus kandleri (strain AV19 / DSM 6324 / JCM 9639 / NBRC 100938), this protein is Glyceraldehyde 3-phosphate phosphatase.